The following is a 340-amino-acid chain: MSELDQLRQEAEQLKNQIRDARKACADATLAQITANIDPVGRIQMRTRRTLRGHLAKIYAMHWGTDSRLLVSASQDGKLIIWDSYTTNKVHAIPLRSSWVMTCAYAPSGNYVACGGLDNICPIYNLKTREGNVRVSRELAGHTGYLSCCRFLDDNQIITSSGDTTCALWDIETGQQTTTFTGHTGDVMSLSLAPDSRCFVSGACDASAKLWDVREGMCRQTFTGHESDINAICFFPNGNAFATGSDDATCRLFDLRADQELMVYSHDNIICGITSVAFSKSGRLLLAGYDDFNCNVWDTLKADRAGVLAGHDNRVSCLGVTDDGMAVATGSWDSFLKIWN.

WD repeat units lie at residues G53–D83, L95–N125, G141–D170, G182–D212, G224–D254, N268–D298, and G310–N340.

This sequence belongs to the WD repeat G protein beta family. G proteins are composed of 3 units, alpha, beta and gamma.

Its function is as follows. Guanine nucleotide-binding proteins (G proteins) are involved as a modulator or transducer in various transmembrane signaling systems. The beta and gamma chains are required for the GTPase activity, for replacement of GDP by GTP, and for G protein-effector interaction. The sequence is that of Guanine nucleotide-binding protein G(I)/G(S)/G(T) subunit beta-1 (gnb1) from Xenopus laevis (African clawed frog).